We begin with the raw amino-acid sequence, 396 residues long: MRTLVFEPFSGASGDMILAGLIDLGADKGEIVEVIQASVDVSVTIEDITKCGIRATDVNIHTKDSARIRSFGELIDIIKDANLPEEVEKNAIAVFRIIGDAEAKVHGMSLEQLHFHEVGQDDALADVIGSCYAIHRMKVENILCTPVNVGGGSVRTAHGTLPVPVPATTEILSGSGLEVHSNGDRELLTPTGAALLTYFANPSDQLPTGKILTTGYGAGDAETDMPNVLRTMLMETTGNLSRDHMEVLETNVDDVTGEVLGNLFETLMKEGAKDVTITPATMKKGRTGHIIHVIAHPENSERIARELIRQTGTLGVRILPTKHRFIAERKMEKVNIIIGKQTFQVTVKIAHDRSDEVLHISAEFEDCRRISQECGLPLKEVIRRAEEKAWNNILKK.

Belongs to the LarC family.

In Methanococcoides burtonii (strain DSM 6242 / NBRC 107633 / OCM 468 / ACE-M), this protein is Putative nickel insertion protein.